The chain runs to 155 residues: Putative pre-16S rRNA nuclease (155 aa).

The protein belongs to the YqgF nuclease family.

Its subcellular location is the cytoplasm. In terms of biological role, could be a nuclease involved in processing of the 5'-end of pre-16S rRNA. The protein is Putative pre-16S rRNA nuclease of Paramagnetospirillum magneticum (strain ATCC 700264 / AMB-1) (Magnetospirillum magneticum).